The following is a 231-amino-acid chain: 5'-methylthioadenosine/S-adenosylhomocysteine nucleosidase (231 aa).

Glutamate 12 acts as the Proton acceptor in catalysis. Residues glycine 78, methionine 153, and methionine 174–glutamate 175 each bind substrate. The Proton donor role is filled by aspartate 198.

It belongs to the PNP/UDP phosphorylase family. MtnN subfamily.

The catalysed reaction is S-adenosyl-L-homocysteine + H2O = S-(5-deoxy-D-ribos-5-yl)-L-homocysteine + adenine. It carries out the reaction S-methyl-5'-thioadenosine + H2O = 5-(methylsulfanyl)-D-ribose + adenine. It catalyses the reaction 5'-deoxyadenosine + H2O = 5-deoxy-D-ribose + adenine. It participates in amino-acid biosynthesis; L-methionine biosynthesis via salvage pathway; S-methyl-5-thio-alpha-D-ribose 1-phosphate from S-methyl-5'-thioadenosine (hydrolase route): step 1/2. In terms of biological role, catalyzes the irreversible cleavage of the glycosidic bond in both 5'-methylthioadenosine (MTA) and S-adenosylhomocysteine (SAH/AdoHcy) to adenine and the corresponding thioribose, 5'-methylthioribose and S-ribosylhomocysteine, respectively. Also cleaves 5'-deoxyadenosine, a toxic by-product of radical S-adenosylmethionine (SAM) enzymes, into 5-deoxyribose and adenine. The protein is 5'-methylthioadenosine/S-adenosylhomocysteine nucleosidase of Bacillus licheniformis (strain ATCC 14580 / DSM 13 / JCM 2505 / CCUG 7422 / NBRC 12200 / NCIMB 9375 / NCTC 10341 / NRRL NRS-1264 / Gibson 46).